A 454-amino-acid chain; its full sequence is Bifunctional protein GlmU (454 aa).

A pyrophosphorylase region spans residues 1-233 (MTNRTCLAVI…RESAVGINNR (233 aa)). Residues 11–14 (LAAG), lysine 25, glutamine 79, and 84–85 (GT) each bind UDP-N-acetyl-alpha-D-glucosamine. Residue aspartate 109 coordinates Mg(2+). UDP-N-acetyl-alpha-D-glucosamine contacts are provided by glycine 145, glutamate 159, asparagine 174, and asparagine 231. Asparagine 231 contacts Mg(2+). The segment at 234–254 (AELAEAEAVWQQKRRRELMLS) is linker. Residues 255–454 (GVTLIAPETV…AEEKAKKSGG (200 aa)) are N-acetyltransferase. UDP-N-acetyl-alpha-D-glucosamine is bound by residues arginine 320 and lysine 338. The Proton acceptor role is filled by histidine 350. 2 residues coordinate UDP-N-acetyl-alpha-D-glucosamine: tyrosine 353 and asparagine 364. Acetyl-CoA contacts are provided by residues alanine 367, 373–374 (NY), serine 410, and arginine 427.

This sequence in the N-terminal section; belongs to the N-acetylglucosamine-1-phosphate uridyltransferase family. It in the C-terminal section; belongs to the transferase hexapeptide repeat family. As to quaternary structure, homotrimer. Mg(2+) serves as cofactor.

Its subcellular location is the cytoplasm. The catalysed reaction is alpha-D-glucosamine 1-phosphate + acetyl-CoA = N-acetyl-alpha-D-glucosamine 1-phosphate + CoA + H(+). It catalyses the reaction N-acetyl-alpha-D-glucosamine 1-phosphate + UTP + H(+) = UDP-N-acetyl-alpha-D-glucosamine + diphosphate. It functions in the pathway nucleotide-sugar biosynthesis; UDP-N-acetyl-alpha-D-glucosamine biosynthesis; N-acetyl-alpha-D-glucosamine 1-phosphate from alpha-D-glucosamine 6-phosphate (route II): step 2/2. It participates in nucleotide-sugar biosynthesis; UDP-N-acetyl-alpha-D-glucosamine biosynthesis; UDP-N-acetyl-alpha-D-glucosamine from N-acetyl-alpha-D-glucosamine 1-phosphate: step 1/1. Its pathway is bacterial outer membrane biogenesis; LPS lipid A biosynthesis. In terms of biological role, catalyzes the last two sequential reactions in the de novo biosynthetic pathway for UDP-N-acetylglucosamine (UDP-GlcNAc). The C-terminal domain catalyzes the transfer of acetyl group from acetyl coenzyme A to glucosamine-1-phosphate (GlcN-1-P) to produce N-acetylglucosamine-1-phosphate (GlcNAc-1-P), which is converted into UDP-GlcNAc by the transfer of uridine 5-monophosphate (from uridine 5-triphosphate), a reaction catalyzed by the N-terminal domain. This chain is Bifunctional protein GlmU, found in Chelativorans sp. (strain BNC1).